Reading from the N-terminus, the 271-residue chain is 3-methyl-2-oxobutanoate hydroxymethyltransferase (271 aa).

2 residues coordinate Mg(2+): D53 and D92. 3-methyl-2-oxobutanoate-binding positions include 53 to 54 (DS), D92, and K120. Position 122 (E122) interacts with Mg(2+). E189 (proton acceptor) is an active-site residue.

The protein belongs to the PanB family. In terms of assembly, homodecamer; pentamer of dimers. The cofactor is Mg(2+).

Its subcellular location is the cytoplasm. It catalyses the reaction 3-methyl-2-oxobutanoate + (6R)-5,10-methylene-5,6,7,8-tetrahydrofolate + H2O = 2-dehydropantoate + (6S)-5,6,7,8-tetrahydrofolate. It participates in cofactor biosynthesis; (R)-pantothenate biosynthesis; (R)-pantoate from 3-methyl-2-oxobutanoate: step 1/2. Catalyzes the reversible reaction in which hydroxymethyl group from 5,10-methylenetetrahydrofolate is transferred onto alpha-ketoisovalerate to form ketopantoate. In Paraburkholderia phytofirmans (strain DSM 17436 / LMG 22146 / PsJN) (Burkholderia phytofirmans), this protein is 3-methyl-2-oxobutanoate hydroxymethyltransferase.